Here is a 1312-residue protein sequence, read N- to C-terminus: Kinesin-like protein KIF16B (1312 aa).

One can recognise a Kinesin motor domain in the interval 3–358; that stretch reads SVKVAVRVRP…LRYANRAKNI (356 aa). 102-109 contributes to the ATP binding site; it reads GQTGSGKS. Positions 366–425 form a coiled coil; it reads EDANVKLIRELRAEIARLKTLLAQGNQIALLDSPTALSMEEKLHQNEARVQELTKEWTNK. Phosphoserine is present on Ser-398. The FHA domain maps to 480–544; it reads VGREDASTEQ…LNQGAVILLG (65 aa). Residue Thr-577 is modified to Phosphothreonine. 4 positions are modified to phosphoserine: Ser-582, Ser-838, Ser-1047, and Ser-1145. Coiled-coil stretches lie at residues 835–913 and 941–1073; these read KLAS…LQNH and QVEK…KQKI. Residues 1177-1291 enclose the PX domain; sequence DPIKISIPRY…KVGLTLSKHT (115 aa).

It belongs to the TRAFAC class myosin-kinesin ATPase superfamily. Kinesin family. In terms of assembly, interacts with PTPN21. Interacts with RAB14.

It localises to the cytoplasm. The protein resides in the cytoskeleton. It is found in the early endosome membrane. The protein localises to the spindle. Plus end-directed microtubule-dependent motor protein involved in endosome transport and receptor recycling and degradation. Regulates the plus end motility of early endosomes and the balance between recycling and degradation of receptors such as EGF receptor (EGFR) and FGF receptor (FGFR). Regulates the Golgi to endosome transport of FGFR-containing vesicles during early development, a key process for developing basement membrane and epiblast and primitive endoderm lineages during early postimplantation development. This chain is Kinesin-like protein KIF16B (Kif16b), found in Mus musculus (Mouse).